Consider the following 1337-residue polypeptide: Zinc finger protein 335 (1337 aa).

2 disordered regions span residues 1–108 (MEEN…LVHS) and 198–226 (GPTS…PPAP). Low complexity-rich tracts occupy residues 31 to 45 (TSEA…AATV) and 54 to 63 (SGVGQSSDGG). The segment at 248–271 (FKCKMCQYRSSTKATLLRHMRERH) adopts a C2H2-type 1 zinc-finger fold. The tract at residues 278–444 (AAAAATGKRG…PPRRRGRPSR (167 aa)) is disordered. The segment covering 302-332 (DRPEEEEEDDDIVDAGAIDDLEEDSDYNPAE) has biased composition (acidic residues). The span at 351–362 (RPRRRPGRPRKL) shows a compositional bias: basic residues. Over residues 363–372 (PRLETSDLHD) the composition is skewed to basic and acidic residues. Polar residues predominate over residues 378-388 (LVSSQSTQSPP). 8 C2H2-type zinc fingers span residues 466 to 488 (YLCR…VNSH), 496 to 518 (FRCL…MFNH), 524 to 546 (YKCD…AAVH), 563 to 585 (FPCP…MKTH), 591 to 613 (HMCD…LLTH), 622 to 644 (FKCE…QLSH), 650 to 673 (FKCS…AVKH), and 679 to 702 (FACE…RCRH). Disordered stretches follow at residues 733–767 (LKQQ…TPPL) and 963–999 (QCGG…ASHT). Residues 741-756 (PGPPLSSPGPEAPQEP) show a composition bias toward pro residues. S976 and S1007 each carry phosphoserine. 4 consecutive C2H2-type zinc fingers follow at residues 1019–1041 (FSCK…KRAH), 1047–1069 (FKCP…MAQH), 1075–1097 (HQCN…MLTH), and 1103–1126 (FSCH…QRLH). K1022 participates in a covalent cross-link: Glycyl lysine isopeptide (Lys-Gly) (interchain with G-Cter in SUMO2). Position 1149 is a phosphoserine (S1149).

This sequence belongs to the krueppel C2H2-type zinc-finger protein family. In terms of assembly, interacts with NCOA6; may enhance ligand-dependent transcriptional activation by nuclear hormone receptors. Interacts with CNOT6. Interacts with CNOT9; the interaction is direct. Component of a nuclear receptor-mediated transcription complex composed of at least ZNF335, CCAR2 and EMSY; the complex stimulates the transcription of nuclear receptor target genes such as SOX9 and HOXA1. Within the complex interacts with EMSY and interacts (via C-terminus) with CCAR2. Interacts with members of histone H3'Lys4'(H3K4) methyltransferase complexes ASH2L, CXXC1, KMT2A/MLL1, RBBP5, SETD1A and WDR5. Component of a histone methylation complex composed of at least ZNF335, RBBP5, ASH2L and WDR5; the complex may have histone H3-specific methyltransferase activity, however does not have specificity for 'Lys-4' of histone H3. Interacts with RBBP5 and WDR5. Interacts with ASHL2. Components of this complex may associate with components of the ZNF335-CCAR2-EMSY nuclear receptor-mediated transcription complex to form a complex at least composed of ZNF335, HCFC1, CCAR2, EMSY, MKI67, RBBP5, ASH2L and WDR5. Within this complex also interacts with HCFC1 and MKI67. Expressed at low levels in cerebral cortex, hippocampus and cerebellum (at protein level).

It localises to the nucleus. Functionally, component or associated component of some histone methyltransferase complexes may regulate transcription through recruitment of those complexes on gene promoters. Enhances ligand-dependent transcriptional activation by nuclear hormone receptors. Plays an important role in neural progenitor cell proliferation and self-renewal through the regulation of specific genes involved brain development, including REST. Also controls the expression of genes involved in somatic development and regulates, for instance, lymphoblast proliferation. The polypeptide is Zinc finger protein 335 (Znf335) (Mus musculus (Mouse)).